A 313-amino-acid chain; its full sequence is Cytochrome f (313 aa).

An N-terminal signal peptide occupies residues 1-31; the sequence is MQNMFSFLSNKKIIALFLIIGTIFMPLSSEA. Residues tyrosine 32, cysteine 52, cysteine 55, and histidine 56 each contribute to the heme site. The chain crosses the membrane as a helical span at residues 279–298; the sequence is IKWLIAFLILSTLGQVFLVL.

This sequence belongs to the cytochrome f family. As to quaternary structure, the 4 large subunits of the cytochrome b6-f complex are cytochrome b6, subunit IV (17 kDa polypeptide, petD), cytochrome f and the Rieske protein, while the 4 small subunits are PetG, PetL, PetM and PetN. The complex functions as a dimer. Requires heme as cofactor.

The protein resides in the plastid. It localises to the chloroplast thylakoid membrane. Component of the cytochrome b6-f complex, which mediates electron transfer between photosystem II (PSII) and photosystem I (PSI), cyclic electron flow around PSI, and state transitions. This is Cytochrome f (petA) from Mesostigma viride (Green alga).